Consider the following 266-residue polypeptide: Protein YdcF (266 aa).

To S.coelicolor SCO4629. Monomer.

In terms of biological role, binds S-adenosyl-L-methionine (AdoMet). The chain is Protein YdcF (ydcF) from Escherichia coli (strain K12).